Consider the following 276-residue polypeptide: uncharacterized protein (276 aa).

Residues 20-137 enclose the AB hydrolase-1 domain; that stretch reads PVLIFIPGAN…PPINTFLPDS (118 aa). The interval 57 to 76 is disordered; that stretch reads GESELTEPLPDSASNPDSDY.

The protein belongs to the AB hydrolase superfamily.

This is an uncharacterized protein from Staphylococcus aureus (strain USA300).